Reading from the N-terminus, the 235-residue chain is Large ribosomal subunit protein uL1 (235 aa).

Belongs to the universal ribosomal protein uL1 family. In terms of assembly, part of the 50S ribosomal subunit.

Binds directly to 23S rRNA. The L1 stalk is quite mobile in the ribosome, and is involved in E site tRNA release. In terms of biological role, protein L1 is also a translational repressor protein, it controls the translation of the L11 operon by binding to its mRNA. The sequence is that of Large ribosomal subunit protein uL1 from Prochlorococcus marinus (strain NATL1A).